Here is a 384-residue protein sequence, read N- to C-terminus: 2-isopropylmalate synthase 2 (384 aa).

The 252-residue stretch at 9–260 (VYIVDTTLRD…DLGIDTSRFR (252 aa)) folds into the Pyruvate carboxyltransferase domain. Mn(2+) contacts are provided by D18, H198, H200, and N234.

It belongs to the alpha-IPM synthase/homocitrate synthase family. LeuA type 1 subfamily. As to quaternary structure, homodimer. Mn(2+) serves as cofactor.

The protein localises to the cytoplasm. The catalysed reaction is 3-methyl-2-oxobutanoate + acetyl-CoA + H2O = (2S)-2-isopropylmalate + CoA + H(+). The protein operates within amino-acid biosynthesis; L-leucine biosynthesis; L-leucine from 3-methyl-2-oxobutanoate: step 1/4. Catalyzes the condensation of the acetyl group of acetyl-CoA with 3-methyl-2-oxobutanoate (2-ketoisovalerate) to form 3-carboxy-3-hydroxy-4-methylpentanoate (2-isopropylmalate). In Caldanaerobacter subterraneus subsp. tengcongensis (strain DSM 15242 / JCM 11007 / NBRC 100824 / MB4) (Thermoanaerobacter tengcongensis), this protein is 2-isopropylmalate synthase 2.